A 428-amino-acid chain; its full sequence is Light-independent protochlorophyllide reductase subunit N (428 aa).

[4Fe-4S] cluster-binding residues include C31, C56, and C117.

Belongs to the BchN/ChlN family. In terms of assembly, protochlorophyllide reductase is composed of three subunits; BchL, BchN and BchB. Forms a heterotetramer of two BchB and two BchN subunits. The cofactor is [4Fe-4S] cluster.

It carries out the reaction chlorophyllide a + oxidized 2[4Fe-4S]-[ferredoxin] + 2 ADP + 2 phosphate = protochlorophyllide a + reduced 2[4Fe-4S]-[ferredoxin] + 2 ATP + 2 H2O. The protein operates within porphyrin-containing compound metabolism; bacteriochlorophyll biosynthesis (light-independent). Component of the dark-operative protochlorophyllide reductase (DPOR) that uses Mg-ATP and reduced ferredoxin to reduce ring D of protochlorophyllide (Pchlide) to form chlorophyllide a (Chlide). This reaction is light-independent. The NB-protein (BchN-BchB) is the catalytic component of the complex. The protein is Light-independent protochlorophyllide reductase subunit N of Rhodopseudomonas palustris (strain HaA2).